The following is a 307-amino-acid chain: MmsAB operon regulatory protein (307 aa).

An HTH araC/xylS-type domain is found at 201 to 299; that stretch reads DGLHAYMREH…GLSPSAYRQR (99 aa). 2 consecutive DNA-binding regions (H-T-H motif) follow at residues 218–239 and 266–289; these read ERLAAFCNLSKFHFVSRYKAIT and VARVGQAVGYDDSYYFSRLFSKVM.

Regulatory protein for the mmsAB operon. Activates the transcription of the mmsAB genes. In Pseudomonas aeruginosa (strain ATCC 15692 / DSM 22644 / CIP 104116 / JCM 14847 / LMG 12228 / 1C / PRS 101 / PAO1), this protein is MmsAB operon regulatory protein.